Here is a 730-residue protein sequence, read N- to C-terminus: Patatin-like phospholipase domain-containing protein CIMG_04897 (730 aa).

Positions 1–11 (MTANSSRRRLQ) are enriched in basic residues. The disordered stretch occupies residues 1 to 26 (MTANSSRRRLQMKSPRTDGDEKEEDY). Residues 97–117 (WPFLLFVLSWIVFLGALYILT) form a helical membrane-spanning segment. The region spanning 281–472 (LCLSGGATLA…RTDIPLKALD (192 aa)) is the PNPLA domain. The GXSXG signature appears at 312 to 316 (GTSGG). Ser314 serves as the catalytic Nucleophile. Catalysis depends on Asp459, which acts as the Proton acceptor. Positions 667–730 (GHFREAPTSH…QGQSSGTKIG (64 aa)) are disordered. Residues 721–730 (QGQSSGTKIG) show a composition bias toward polar residues.

Belongs to the PLPL family.

It localises to the membrane. Probable lipid hydrolase. The chain is Patatin-like phospholipase domain-containing protein CIMG_04897 from Coccidioides immitis (strain RS) (Valley fever fungus).